Reading from the N-terminus, the 69-residue chain is DNA gyrase inhibitor YacG (69 aa).

4 residues coordinate Zn(2+): Cys-13, Cys-16, Cys-32, and Cys-36.

This sequence belongs to the DNA gyrase inhibitor YacG family. As to quaternary structure, interacts with GyrB. Zn(2+) serves as cofactor.

Inhibits all the catalytic activities of DNA gyrase by preventing its interaction with DNA. Acts by binding directly to the C-terminal domain of GyrB, which probably disrupts DNA binding by the gyrase. The sequence is that of DNA gyrase inhibitor YacG from Neisseria meningitidis serogroup B (strain ATCC BAA-335 / MC58).